Here is a 516-residue protein sequence, read N- to C-terminus: Delta(24)-sterol reductase (516 aa).

An N-terminal signal peptide occupies residues 1 to 22 (MEPAVSLAVCALLFLLWVRLKG). Topologically, residues 23-31 (LEFVLIHQR) are lumenal. The chain crosses the membrane as a helical span at residues 32–52 (WVFVCLFLLPLSLIFDIYYYV). Residues 53 to 516 (RAWVVFKLSS…YDKICKAARH (464 aa)) lie on the Cytoplasmic side of the membrane. The region spanning 58-234 (FKLSSAPRLH…VAAEIRIIPA (177 aa)) is the FAD-binding PCMH-type domain. FAD is bound at residue 163 to 175 (TVGGLIMGTGIES).

It belongs to the FAD-binding oxidoreductase/transferase type 4 family. In terms of assembly, interacts with DHCR7; this interaction regulates DHCR7 activity. FAD serves as cofactor. In terms of tissue distribution, highly expressed in brain and adrenal gland with moderate expression in liver, lung, spleen, prostate and spinal cord. Low expression in heart, uterus and prostate. Undetectable in blood cells. In the brain, strongly expressed in cortical regions, substantia nigra, caudate nucleus, hippocampus, medulla oblongata and pons. In brains affected by Alzheimer disease, expression in the inferior temporal lobe is substantially lower than in the frontal cortex.

It localises to the endoplasmic reticulum membrane. The protein resides in the golgi apparatus membrane. The catalysed reaction is cholesterol + NADP(+) = desmosterol + NADPH + H(+). It carries out the reaction lanosterol + NADPH + H(+) = 24,25-dihydrolanosterol + NADP(+). It catalyses the reaction 5alpha-cholest-8-en-3beta-ol + NADP(+) = zymosterol + NADPH + H(+). The protein operates within steroid biosynthesis; cholesterol biosynthesis. Functionally, catalyzes the reduction of the delta-24 double bond of sterol intermediates during cholesterol biosynthesis. In addition to its cholesterol-synthesizing activity, can protect cells from oxidative stress by reducing caspase 3 activity during apoptosis induced by oxidative stress. Also protects against amyloid-beta peptide-induced apoptosis. The polypeptide is Delta(24)-sterol reductase (DHCR24) (Homo sapiens (Human)).